Reading from the N-terminus, the 475-residue chain is Legumain (475 aa).

The first 15 residues, 1-15 (MVMMLVMLSLHGTAA), serve as a signal peptide directing secretion. Residues 16 to 35 (RLNRREWDSVIQLPTEPVDD) constitute a propeptide that is removed on maturation. The active site involves H158. C200 (nucleophile) is an active-site residue. A disulfide bond links C233 and C247. N300 is a glycosylation site (N-linked (GlcNAc...) asparagine). Disulfide bonds link C411–C441 and C423–C458.

It belongs to the peptidase C13 family. Homodimer.

It catalyses the reaction Hydrolysis of proteins and small molecule substrates at -Asn-|-Xaa- bonds.. With respect to regulation, repressed by various protease inhibitors including p-chloromercuribenzene sulfonic acid (PCMBS), N-ethylmaleimide, kininogen, elastatinal, cystatin EW and leupeptin. In terms of biological role, asparaginyl endopeptidase able to cleave almost all peptide bonds on the carboxyl side of Asn residues, except at the NH2 terminus or second position or with N-glycosylated Asn. Responsible for the maturation (circular permutation) of concanavalin A from its precursor, by performing both cleavage and cleavage-coupled transpeptidation to form conA. This Canavalia ensiformis (Jack bean) protein is Legumain.